The chain runs to 160 residues: uncharacterized protein (160 aa).

This is an uncharacterized protein from Methanocaldococcus jannaschii (strain ATCC 43067 / DSM 2661 / JAL-1 / JCM 10045 / NBRC 100440) (Methanococcus jannaschii).